The following is a 540-amino-acid chain: ADP,ATP carrier protein 2 (540 aa).

11 helical membrane passes run 24 to 44 (FSKFVPLFLLAFFVGFNYCLL), 62 to 82 (VIPFLKVWGIVPGAVIVTMVY), 94 to 114 (VFYCFMAAFLGFFFLFAVIIY), 151 to 171 (IYYVMSELWSSVVLSMLFWGL), 223 to 243 (SVMLNLTMLITCSGLIMIWLY), 295 to 315 (LLGLAIIVLSYNLVIHLFEVV), 337 to 357 (ITTLIGVVSVLAAVLLTGQCI), 367 to 387 (LVTPLVMLVSGLLFFGTIFAA), 391 to 411 (ISIFGGVLGMTPLALAAWTGG), 458 to 478 (SGGSLIYQGLLVIFSSVAASL), and 480 to 500 (VIALVLLIIMVVWIAVVAYIG).

This sequence belongs to the ADP/ATP translocase tlc family.

It is found in the cell membrane. This is ADP,ATP carrier protein 2 (tlcB) from Chlamydia pneumoniae (Chlamydophila pneumoniae).